Reading from the N-terminus, the 156-residue chain is CD-NTase-associated protein 8 (156 aa).

The protein belongs to the bacterial HORMA family. HORMA3 subfamily. In terms of assembly, interacts with Cap7 (also called HORMA2) and CdnC; forms CdnD:Cap7:Cap8 (also called CdnD:HORMA2:HORMA3) complexes with stoichiometries of 1:1:1 and 2:1:1.

CBASS (cyclic oligonucleotide-based antiphage signaling system) provides immunity against bacteriophage. The CD-NTase protein synthesizes cyclic nucleotides in response to infection; these serve as specific second messenger signals. The signals activate a diverse range of effectors, leading to bacterial cell death and thus abortive phage infection. A type III-C(AAA) CBASS system. Functionally, a member of the CBASS system in this bacteria. It does not seem to bind a closure peptide, its exact function is unknown. The protein is CD-NTase-associated protein 8 of Pseudomonas aeruginosa.